The following is a 92-amino-acid chain: Small ribosomal subunit protein uS19c (92 aa).

Belongs to the universal ribosomal protein uS19 family.

The protein localises to the plastid. It is found in the chloroplast. In terms of biological role, protein S19 forms a complex with S13 that binds strongly to the 16S ribosomal RNA. The sequence is that of Small ribosomal subunit protein uS19c from Physcomitrium patens (Spreading-leaved earth moss).